A 263-amino-acid polypeptide reads, in one-letter code: Acyl-[acyl-carrier-protein]--UDP-N-acetylglucosamine O-acyltransferase (263 aa).

It belongs to the transferase hexapeptide repeat family. LpxA subfamily. Homotrimer.

The protein resides in the cytoplasm. The catalysed reaction is a (3R)-hydroxyacyl-[ACP] + UDP-N-acetyl-alpha-D-glucosamine = a UDP-3-O-[(3R)-3-hydroxyacyl]-N-acetyl-alpha-D-glucosamine + holo-[ACP]. It functions in the pathway glycolipid biosynthesis; lipid IV(A) biosynthesis; lipid IV(A) from (3R)-3-hydroxytetradecanoyl-[acyl-carrier-protein] and UDP-N-acetyl-alpha-D-glucosamine: step 1/6. In terms of biological role, involved in the biosynthesis of lipid A, a phosphorylated glycolipid that anchors the lipopolysaccharide to the outer membrane of the cell. The sequence is that of Acyl-[acyl-carrier-protein]--UDP-N-acetylglucosamine O-acyltransferase from Campylobacter jejuni subsp. jejuni serotype O:23/36 (strain 81-176).